A 156-amino-acid polypeptide reads, in one-letter code: Cyclin-dependent kinase inhibitor 2A (156 aa).

M1 carries the N-acetylmethionine modification. Phosphoserine is present on residues S7 and S8. 4 ANK repeats span residues 11–40 (PSADWLATAAARGRVEEVRALLEAGALPNA), 44–72 (YGRRPIQVMMMGSARVAELLLLHGAEPNC), 77–106 (TLTRPVHDAAREGFLDTLVVLHRAGARLDV), and 110–139 (WGRLPVDLAEELGHRDVARYLRAAAGGTRG). 2 positions are modified to phosphoserine: S140 and S152.

It belongs to the CDKN2 cyclin-dependent kinase inhibitor family. In terms of assembly, heterodimer with CDK4 or CDK6. Predominant p16 complexes contained CDK6. Interacts with CDK4 (both 'T-172'-phosphorylated and non-phosphorylated forms); the interaction inhibits cyclin D-CDK4 kinase activity. Interacts with ISCO2. Post-translationally, phosphorylation seems to increase interaction with CDK4. Widely expressed but not detected in brain or skeletal muscle. Isoform 3 is pancreas-specific.

The protein localises to the cytoplasm. It is found in the nucleus. Its function is as follows. Acts as a negative regulator of the proliferation of normal cells by interacting strongly with CDK4 and CDK6. This inhibits their ability to interact with cyclins D and to phosphorylate the retinoblastoma protein. The sequence is that of Cyclin-dependent kinase inhibitor 2A from Homo sapiens (Human).